Here is a 138-residue protein sequence, read N- to C-terminus: ATP synthase epsilon chain (138 aa).

It belongs to the ATPase epsilon chain family. F-type ATPases have 2 components, CF(1) - the catalytic core - and CF(0) - the membrane proton channel. CF(1) has five subunits: alpha(3), beta(3), gamma(1), delta(1), epsilon(1). CF(0) has three main subunits: a, b and c.

The protein resides in the cell membrane. In terms of biological role, produces ATP from ADP in the presence of a proton gradient across the membrane. The chain is ATP synthase epsilon chain from Streptococcus uberis (strain ATCC BAA-854 / 0140J).